Reading from the N-terminus, the 550-residue chain is DNA mismatch repair protein MutL (550 aa).

This sequence belongs to the DNA mismatch repair MutL/HexB family.

In terms of biological role, this protein is involved in the repair of mismatches in DNA. It is required for dam-dependent methyl-directed DNA mismatch repair. May act as a 'molecular matchmaker', a protein that promotes the formation of a stable complex between two or more DNA-binding proteins in an ATP-dependent manner without itself being part of a final effector complex. This Microcystis aeruginosa (strain NIES-843 / IAM M-2473) protein is DNA mismatch repair protein MutL.